We begin with the raw amino-acid sequence, 203 residues long: E3 ubiquitin-protein ligase RNF152 (203 aa).

The RING-type zinc-finger motif lies at Cys-12–Arg-55. A necessary for interaction with RRAGA region spans residues Ile-106–Thr-165. The disordered stretch occupies residues Gln-140–Gly-159. Residues Ser-167–Leu-187 traverse the membrane as a helical segment.

This sequence belongs to the RNF152 family. In terms of assembly, interacts with RRAGA (inactive GDP-bound form); stimulated by amino acid starvation. Interacts with SEC16A. In terms of processing, ubiquitinated. Autoubiquitinated in vitro, leading to its degradation by the proteasome.

The protein localises to the lysosome membrane. It carries out the reaction S-ubiquitinyl-[E2 ubiquitin-conjugating enzyme]-L-cysteine + [acceptor protein]-L-lysine = [E2 ubiquitin-conjugating enzyme]-L-cysteine + N(6)-ubiquitinyl-[acceptor protein]-L-lysine.. It functions in the pathway protein modification; protein ubiquitination. Its function is as follows. E3 ubiquitin-protein ligase that acts as a negative regulator of mTORC1 signaling by mediating ubiquitination of RagA/RRAGA and RHEB. Catalyzes 'Lys-63'-linked polyubiquitination of RagA/RRAGA in response to amino acid starvation, thereby regulating mTORC1 signaling. Also mediates monoubiquitination of RHEB, promoting its association with the TSC-TBC complex and subsequent inhibition. Also mediates 'Lys-48'-linked polyubiquitination of target proteins and their subsequent targeting to the proteasome for degradation. Induces apoptosis when overexpressed. In Rattus norvegicus (Rat), this protein is E3 ubiquitin-protein ligase RNF152.